Reading from the N-terminus, the 413-residue chain is Cell division protein FtsZ 2 (413 aa).

Residues 132–134, Glu-171, Arg-175, and Asp-218 each bind GTP; that span reads GTG.

It belongs to the FtsZ family. Homodimer. Polymerizes to form a dynamic ring structure in a strictly GTP-dependent manner. Interacts directly with several other division proteins.

The protein localises to the cytoplasm. In terms of biological role, essential cell division protein that forms a contractile ring structure (Z ring) at the future cell division site. The regulation of the ring assembly controls the timing and the location of cell division. One of the functions of the FtsZ ring is to recruit other cell division proteins to the septum to produce a new cell wall between the dividing cells. Binds GTP and shows GTPase activity. In Thermococcus kodakarensis (strain ATCC BAA-918 / JCM 12380 / KOD1) (Pyrococcus kodakaraensis (strain KOD1)), this protein is Cell division protein FtsZ 2.